Here is a 274-residue protein sequence, read N- to C-terminus: 3-methyl-2-oxobutanoate hydroxymethyltransferase (274 aa).

Residues Asp-46 and Asp-85 each coordinate Mg(2+). 3-methyl-2-oxobutanoate-binding positions include 46 to 47, Asp-85, and Lys-115; that span reads DS. Glu-117 provides a ligand contact to Mg(2+). Catalysis depends on Glu-184, which acts as the Proton acceptor.

The protein belongs to the PanB family. Homodecamer; pentamer of dimers. Mg(2+) serves as cofactor.

It localises to the cytoplasm. The enzyme catalyses 3-methyl-2-oxobutanoate + (6R)-5,10-methylene-5,6,7,8-tetrahydrofolate + H2O = 2-dehydropantoate + (6S)-5,6,7,8-tetrahydrofolate. Its pathway is cofactor biosynthesis; coenzyme A biosynthesis. Catalyzes the reversible reaction in which hydroxymethyl group from 5,10-methylenetetrahydrofolate is transferred onto alpha-ketoisovalerate to form ketopantoate. This Halobacterium salinarum (strain ATCC 29341 / DSM 671 / R1) protein is 3-methyl-2-oxobutanoate hydroxymethyltransferase.